Consider the following 63-residue polypeptide: MTPSGIYLLPKIFVIFIFCGEPTVMLEVQIKTKLPENCTLATLNGIMKSCIVKVEASPRERRL.

This is an uncharacterized protein from Archaeoglobus fulgidus (strain ATCC 49558 / DSM 4304 / JCM 9628 / NBRC 100126 / VC-16).